An 821-amino-acid chain; its full sequence is V-type proton ATPase subunit a3 (821 aa).

Residue Ala-2 is modified to N-acetylalanine. Topologically, residues Ala-2–Thr-421 are cytoplasmic. Residues Lys-97 to Ala-144 adopt a coiled-coil conformation. Phosphoserine is present on Ser-174. Residues Phe-422 to Ala-442 form a helical membrane-spanning segment. The Vacuolar portion of the chain corresponds to Thr-443–Arg-469. Residues Tyr-470–Phe-490 form a helical membrane-spanning segment. The Cytoplasmic portion of the chain corresponds to Ser-491–Lys-548. A helical membrane pass occupies residues Met-549–Ala-569. Topologically, residues Arg-570 to Gln-581 are vacuolar. The chain crosses the membrane as a helical span at residues Phe-582–Ile-602. The Cytoplasmic portion of the chain corresponds to Lys-603–Gln-640. The chain crosses the membrane as a helical span at residues Leu-641 to Ile-661. The Vacuolar segment spans residues Leu-662–Pro-758. The helical transmembrane segment at Leu-759–Met-779 threads the bilayer. Residues Glu-780 to Glu-821 lie on the Cytoplasmic side of the membrane.

This sequence belongs to the V-ATPase 116 kDa subunit family. In terms of assembly, V-ATPase is a heteromultimeric enzyme composed of a peripheral catalytic V1 complex (components A to H) attached to an integral membrane V0 proton pore complex (components: a, c, c'', d and e). Expressed in etiolated seedlings hypocotyls.

The protein resides in the vacuole membrane. Functionally, essential component of the vacuolar proton pump (V-ATPase), a multimeric enzyme that catalyzes the translocation of protons across the membranes. Required for assembly and activity of the V-ATPase. Involved in vacuolar nutrient storage (e.g. accumulation and storage of nitrate) and in tolerance to some toxic ions (e.g. zinc ions sequestration in vacuoles). In Arabidopsis thaliana (Mouse-ear cress), this protein is V-type proton ATPase subunit a3 (VHA-a3).